The chain runs to 394 residues: MAKAKFERTKPHVNIGTIGHVDHGKTSLTAAITIVLAKTGGAQATAYDQIDAAPEEKERGITISTAHVEYETKNRHYAHVDCPGHADYVKNMITGAAQMDGAILVVSAADGPMPQTREHILLAKQVGVPAMVVFLNKVDMVDDPDLLELVEMEVRELLSKYGFPGDEIPIIKGSALQALEGKPEGEKAINELMDAVDSYIPQPVRATDKPFLMPIEDVFSISGRGTVVTGRVESGIIKVGEEIEIVGLKDTQKTTCTGVEMFRKLLDEGQAGDNIGVLLRGTKREEVERGQVLAKPGSIKPHDKFEAEVYVLSKEEGGRHTPFTNDYRPQFYFRTTDVTGTIKLPADKQMVMPGDNATFTVELIKPIAMQEGLKFSIREGGRTVGAGVVTKINN.

One can recognise a tr-type G domain in the interval 10–204; the sequence is KPHVNIGTIG…AVDSYIPQPV (195 aa). Positions 19–26 are G1; the sequence is GHVDHGKT. Residue 19–26 coordinates GTP; it reads GHVDHGKT. Thr26 contacts Mg(2+). Positions 60 to 64 are G2; it reads GITIS. Positions 81–84 are G3; it reads DCPG. Residues 81-85 and 136-139 each bind GTP; these read DCPGH and NKVD. The interval 136–139 is G4; it reads NKVD. Residues 174–176 form a G5 region; sequence SAL.

The protein belongs to the TRAFAC class translation factor GTPase superfamily. Classic translation factor GTPase family. EF-Tu/EF-1A subfamily. As to quaternary structure, monomer.

It localises to the cytoplasm. It carries out the reaction GTP + H2O = GDP + phosphate + H(+). Its function is as follows. GTP hydrolase that promotes the GTP-dependent binding of aminoacyl-tRNA to the A-site of ribosomes during protein biosynthesis. In Rickettsia canadensis (strain McKiel), this protein is Elongation factor Tu.